Here is a 145-residue protein sequence, read N- to C-terminus: MSKKEVAIYTDGACSGNPGAGGWAAIILFQDYRKDIYGREENTTNNKMELTAVINGLKVLKFSCNINLYTDSLYVKHGITEWINKWKMNGWKTSNKKSVKNMELWKELDNVASQHEIDWKWVKAHSGDKYNEEADSLARKAIIDA.

The RNase H type-1 domain maps to 2-143; the sequence is SKKEVAIYTD…ADSLARKAII (142 aa). 4 residues coordinate Mg(2+): Asp11, Glu49, Asp71, and Asp135.

It belongs to the RNase H family. In terms of assembly, monomer. Mg(2+) serves as cofactor.

It localises to the cytoplasm. It carries out the reaction Endonucleolytic cleavage to 5'-phosphomonoester.. Functionally, endonuclease that specifically degrades the RNA of RNA-DNA hybrids. The sequence is that of Ribonuclease H from Wolbachia sp. subsp. Drosophila simulans (strain wRi).